The primary structure comprises 141 residues: Small ribosomal subunit protein uS12 (141 aa).

The protein belongs to the universal ribosomal protein uS12 family. Part of the 30S ribosomal subunit.

With S4 and S5 plays an important role in translational accuracy. Located at the interface of the 30S and 50S subunits. The chain is Small ribosomal subunit protein uS12 from Methanothermobacter thermautotrophicus (strain ATCC 29096 / DSM 1053 / JCM 10044 / NBRC 100330 / Delta H) (Methanobacterium thermoautotrophicum).